Reading from the N-terminus, the 242-residue chain is Placenta-expressed transcript 1 protein (242 aa).

Residues 1-26 (MAILRSLLLPLGLLLCLWLLCSPASC) form the signal peptide. Topologically, residues 27-220 (TNSTTNCKPF…TTHKSSANRA (194 aa)) are extracellular. N-linked (GlcNAc...) asparagine glycosylation is found at Asn28, Asn81, and Asn106. A disordered region spans residues 162-209 (VITTPTHKPTPAPPKPTTNPQKTTTNHSIPTTSLPKPTTSLYTSHPKL). Residues 169–178 (KPTPAPPKPT) are compositionally biased toward pro residues. The span at 179-205 (TNPQKTTTNHSIPTTSLPKPTTSLYTS) shows a compositional bias: low complexity. A helical membrane pass occupies residues 221-241 (FLCPVREAIQILFIFLIGTLL). Position 242 (Phe242) is a topological domain, cytoplasmic.

Post-translationally, N-glycosylated.

Its subcellular location is the membrane. The protein localises to the apical cell membrane. Its function is as follows. Modulates leading keratinocyte migration and cellular adhesion to matrix proteins during a wound-healing response and promotes wound repair. May play a role during trichilemmal differentiation of the hair follicle. This Bos taurus (Bovine) protein is Placenta-expressed transcript 1 protein (PLET1).